Reading from the N-terminus, the 539-residue chain is Eukaryotic translation initiation factor 3 subunit L (539 aa).

The PCI domain maps to 302–514 (TFSSILLYIQ…IHIADTKVSH (213 aa)).

The protein belongs to the eIF-3 subunit L family. Component of the eukaryotic translation initiation factor 3 (eIF-3) complex.

The protein resides in the cytoplasm. Its function is as follows. Component of the eukaryotic translation initiation factor 3 (eIF-3) complex, which is involved in protein synthesis of a specialized repertoire of mRNAs and, together with other initiation factors, stimulates binding of mRNA and methionyl-tRNAi to the 40S ribosome. The eIF-3 complex specifically targets and initiates translation of a subset of mRNAs involved in cell proliferation. The chain is Eukaryotic translation initiation factor 3 subunit L from Anopheles gambiae (African malaria mosquito).